We begin with the raw amino-acid sequence, 140 residues long: Nucleoside diphosphate kinase (140 aa).

K11, F59, R87, T93, R104, and N114 together coordinate ATP. The active-site Pros-phosphohistidine intermediate is the H117.

The protein belongs to the NDK family. Homotetramer. It depends on Mg(2+) as a cofactor.

Its subcellular location is the cytoplasm. The catalysed reaction is a 2'-deoxyribonucleoside 5'-diphosphate + ATP = a 2'-deoxyribonucleoside 5'-triphosphate + ADP. It catalyses the reaction a ribonucleoside 5'-diphosphate + ATP = a ribonucleoside 5'-triphosphate + ADP. In terms of biological role, major role in the synthesis of nucleoside triphosphates other than ATP. The ATP gamma phosphate is transferred to the NDP beta phosphate via a ping-pong mechanism, using a phosphorylated active-site intermediate. The sequence is that of Nucleoside diphosphate kinase from Rickettsia felis (strain ATCC VR-1525 / URRWXCal2) (Rickettsia azadi).